Reading from the N-terminus, the 278-residue chain is Urease accessory protein UreD (278 aa).

This sequence belongs to the UreD family. As to quaternary structure, ureD, UreF and UreG form a complex that acts as a GTP-hydrolysis-dependent molecular chaperone, activating the urease apoprotein by helping to assemble the nickel containing metallocenter of UreC. The UreE protein probably delivers the nickel.

It is found in the cytoplasm. In terms of biological role, required for maturation of urease via the functional incorporation of the urease nickel metallocenter. In Deinococcus radiodurans (strain ATCC 13939 / DSM 20539 / JCM 16871 / CCUG 27074 / LMG 4051 / NBRC 15346 / NCIMB 9279 / VKM B-1422 / R1), this protein is Urease accessory protein UreD.